An 805-amino-acid chain; its full sequence is Arginine/serine-rich protein PNISR (805 aa).

Positions 74–88 (PNNHGNFQGDSNFNR) are enriched in polar residues. Disordered regions lie at residues 74–331 (PNNH…EEKE) and 382–805 (LTGL…SRSR). Composition is skewed to pro residues over residues 100 to 115 (PPHP…PTPG) and 183 to 195 (YWQP…PAPP). Positions 197–210 (NRRERPSSFRDRQR) are enriched in basic and acidic residues. Ser-204 and Ser-211 each carry phosphoserine. Lys-218 is covalently cross-linked (Glycyl lysine isopeptide (Lys-Gly) (interchain with G-Cter in SUMO2)). Residues 237 to 276 (REGLEKMEREKQKKLEKERMEQQRSQLSKKEKKATEDAEG) adopt a coiled-coil conformation. Residues 238 to 258 (EGLEKMEREKQKKLEKERMEQ) show a composition bias toward basic and acidic residues. A phosphoserine mark is found at Ser-290, Ser-304, Ser-313, and Ser-321. Residues 290-299 (SDEEEEDTEN) show a composition bias toward acidic residues. A compositionally biased stretch (gly residues) spans 384 to 393 (GLGGLGGYGS). Residues 421–463 (QKQEAFWRKEKEQQLLHDKQMEEEKQQTERVTKEMNEFIHKEQ) are compositionally biased toward basic and acidic residues. A coiled-coil region spans residues 429 to 461 (KEKEQQLLHDKQMEEEKQQTERVTKEMNEFIHK). Ser-465 and Ser-467 each carry phosphoserine. Basic and acidic residues-rich tracts occupy residues 470–486 (EARE…KRTP) and 494–506 (EPKK…EKQG). A Phosphothreonine modification is found at Thr-485. Residue Lys-496 forms a Glycyl lysine isopeptide (Lys-Gly) (interchain with G-Cter in SUMO2) linkage. A compositionally biased stretch (low complexity) spans 508–550 (SRSGSSSSGSSSSNSRTSSTSSTVSSSSYSSSSGSSRTSSRSS). Composition is skewed to basic residues over residues 551–579 (SPKR…YSRR), 587–598 (ARVKIRDRRRSN), and 607–639 (RRNR…SRDR). Residues 659–721 (EAKEQERKKE…KRKRESERTF (63 aa)) show a composition bias toward basic and acidic residues. Residues 673–703 (IDKDRKKKDKEREREQDKRKEKQKREEKDFK) adopt a coiled-coil conformation. A Glycyl lysine isopeptide (Lys-Gly) (interchain with G-Cter in SUMO2) cross-link involves residue Lys-703. Position 726 is a phosphoserine (Ser-726). Positions 732 to 753 (IRHDSRQDSKKSTTKDSKKHSG) are enriched in basic and acidic residues. Low complexity predominate over residues 754 to 767 (SDSSGRSSSESPGS). 2 stretches are compositionally biased toward basic residues: residues 771 to 781 (KKAKKPKHSRS) and 789 to 805 (RSGK…SRSR).

It belongs to the splicing factor SR family. As to quaternary structure, interacts with PNN. As to expression, expressed in heart, skeletal muscle, thymus, spleen, kidney, liver, placenta and leukocytes.

It is found in the nucleus speckle. This is Arginine/serine-rich protein PNISR (PNISR) from Homo sapiens (Human).